A 457-amino-acid chain; its full sequence is Cysteine--tRNA ligase (457 aa).

Cysteine 30 contacts Zn(2+). Residues 32-42 carry the 'HIGH' region motif; it reads PTVYDRAHLGN. Zn(2+) contacts are provided by cysteine 213, histidine 238, and glutamate 242. The 'KMSKS' region signature appears at 271-275; sequence KMSKS. An ATP-binding site is contributed by lysine 274.

This sequence belongs to the class-I aminoacyl-tRNA synthetase family. As to quaternary structure, monomer. Zn(2+) is required as a cofactor.

The protein resides in the cytoplasm. The enzyme catalyses tRNA(Cys) + L-cysteine + ATP = L-cysteinyl-tRNA(Cys) + AMP + diphosphate. The polypeptide is Cysteine--tRNA ligase (Ruegeria sp. (strain TM1040) (Silicibacter sp.)).